Reading from the N-terminus, the 526-residue chain is Bifunctional purine biosynthesis protein PurH (526 aa).

The MGS-like domain maps to 1–145; it reads MIRTALLSVS…KNHQDVTVLI (145 aa).

Belongs to the PurH family.

It carries out the reaction (6R)-10-formyltetrahydrofolate + 5-amino-1-(5-phospho-beta-D-ribosyl)imidazole-4-carboxamide = 5-formamido-1-(5-phospho-D-ribosyl)imidazole-4-carboxamide + (6S)-5,6,7,8-tetrahydrofolate. It catalyses the reaction IMP + H2O = 5-formamido-1-(5-phospho-D-ribosyl)imidazole-4-carboxamide. The protein operates within purine metabolism; IMP biosynthesis via de novo pathway; 5-formamido-1-(5-phospho-D-ribosyl)imidazole-4-carboxamide from 5-amino-1-(5-phospho-D-ribosyl)imidazole-4-carboxamide (10-formyl THF route): step 1/1. Its pathway is purine metabolism; IMP biosynthesis via de novo pathway; IMP from 5-formamido-1-(5-phospho-D-ribosyl)imidazole-4-carboxamide: step 1/1. The chain is Bifunctional purine biosynthesis protein PurH from Polynucleobacter necessarius subsp. necessarius (strain STIR1).